Reading from the N-terminus, the 701-residue chain is Elongation factor G (701 aa).

One can recognise a tr-type G domain in the interval 8–290 (ARYRNIGISA…AVIEYLPAPT (283 aa)). Residues 17–24 (AHIDAGKT), 88–92 (DTPGH), and 142–145 (NKMD) contribute to the GTP site.

Belongs to the TRAFAC class translation factor GTPase superfamily. Classic translation factor GTPase family. EF-G/EF-2 subfamily.

The protein resides in the cytoplasm. Catalyzes the GTP-dependent ribosomal translocation step during translation elongation. During this step, the ribosome changes from the pre-translocational (PRE) to the post-translocational (POST) state as the newly formed A-site-bound peptidyl-tRNA and P-site-bound deacylated tRNA move to the P and E sites, respectively. Catalyzes the coordinated movement of the two tRNA molecules, the mRNA and conformational changes in the ribosome. This chain is Elongation factor G, found in Sodalis glossinidius (strain morsitans).